A 232-amino-acid chain; its full sequence is Ubiquinone biosynthesis O-methyltransferase (232 aa).

S-adenosyl-L-methionine is bound by residues Arg36, Gly55, Asp76, and Met120.

The protein belongs to the methyltransferase superfamily. UbiG/COQ3 family.

It carries out the reaction a 3-demethylubiquinol + S-adenosyl-L-methionine = a ubiquinol + S-adenosyl-L-homocysteine + H(+). The catalysed reaction is a 3-(all-trans-polyprenyl)benzene-1,2-diol + S-adenosyl-L-methionine = a 2-methoxy-6-(all-trans-polyprenyl)phenol + S-adenosyl-L-homocysteine + H(+). It participates in cofactor biosynthesis; ubiquinone biosynthesis. Functionally, O-methyltransferase that catalyzes the 2 O-methylation steps in the ubiquinone biosynthetic pathway. This chain is Ubiquinone biosynthesis O-methyltransferase, found in Burkholderia cenocepacia (strain ATCC BAA-245 / DSM 16553 / LMG 16656 / NCTC 13227 / J2315 / CF5610) (Burkholderia cepacia (strain J2315)).